The following is a 308-amino-acid chain: Inactive C-alpha-formylglycine-generating enzyme 2 (308 aa).

A signal peptide spans 1-33 (MRSEFWFPSMGSLLPPVLLLWLLSCPRLQLGHA). A disulfide bridge connects residues Cys-163 and Cys-297. N-linked (GlcNAc...) asparagine glycosylation is present at Asn-198. Residues Asn-201, Leu-202, Asp-215, Phe-217, Asp-236, Gly-239, Val-241, and Glu-243 each contribute to the Ca(2+) site. Positions 281 to 291 (RMGNTPDSASD) are enriched in polar residues. Positions 281–308 (RMGNTPDSASDNLGFRCASSAGRPKEDL) are disordered. The short motif at 305 to 308 (KEDL) is the Non-canonical ER retention motif element.

This sequence belongs to the sulfatase-modifying factor family. Homodimer and heterodimer with SUMF1.

It localises to the endoplasmic reticulum lumen. In terms of biological role, lacks formylglycine generating activity and is unable to convert newly synthesized inactive sulfatases to their active form. Inhibits the activation of sulfatases by SUMF1. The chain is Inactive C-alpha-formylglycine-generating enzyme 2 from Mus musculus (Mouse).